Reading from the N-terminus, the 347-residue chain is NADH-ubiquinone oxidoreductase chain 2 (347 aa).

11 consecutive transmembrane segments (helical) span residues 3–23, 25–45, 59–79, 96–116, 122–142, 149–169, 178–198, 200–220, 237–257, 274–294, and 325–345; these read PPIL…VLTS, HWLT…PILM, YLLT…IDLL, AMMT…FWVP, IHMS…LSIL, INPN…GWGG, ILAY…LYNP, MMIL…MLFM, APLI…LPPL, EMII…YFYM, and LLSP…LLSI.

It belongs to the complex I subunit 2 family. Core subunit of respiratory chain NADH dehydrogenase (Complex I) which is composed of 45 different subunits. Interacts with TMEM242.

The protein localises to the mitochondrion inner membrane. The enzyme catalyses a ubiquinone + NADH + 5 H(+)(in) = a ubiquinol + NAD(+) + 4 H(+)(out). Core subunit of the mitochondrial membrane respiratory chain NADH dehydrogenase (Complex I) which catalyzes electron transfer from NADH through the respiratory chain, using ubiquinone as an electron acceptor. Essential for the catalytic activity and assembly of complex I. In Cynictis penicillata (Yellow mongoose), this protein is NADH-ubiquinone oxidoreductase chain 2.